The sequence spans 277 residues: Large ribosomal subunit protein uL2 (277 aa).

The tract at residues 222–259 (GSVMNPNDHPHGGGEGKSPVGRPSPVTPWGKPALGYKT) is disordered.

This sequence belongs to the universal ribosomal protein uL2 family. As to quaternary structure, part of the 50S ribosomal subunit. Forms a bridge to the 30S subunit in the 70S ribosome.

In terms of biological role, one of the primary rRNA binding proteins. Required for association of the 30S and 50S subunits to form the 70S ribosome, for tRNA binding and peptide bond formation. It has been suggested to have peptidyltransferase activity; this is somewhat controversial. Makes several contacts with the 16S rRNA in the 70S ribosome. This chain is Large ribosomal subunit protein uL2, found in Clostridium beijerinckii (strain ATCC 51743 / NCIMB 8052) (Clostridium acetobutylicum).